We begin with the raw amino-acid sequence, 55 residues long: UPF0391 membrane protein Tbd_2772 (55 aa).

Transmembrane regions (helical) follow at residues 1-21 (MFGW…FGFA) and 28-48 (AWIA…MLVM).

It belongs to the UPF0391 family.

It localises to the cell membrane. In Thiobacillus denitrificans (strain ATCC 25259 / T1), this protein is UPF0391 membrane protein Tbd_2772.